A 1368-amino-acid chain; its full sequence is DNA-directed RNA polymerase subunit beta (1368 aa).

This sequence belongs to the RNA polymerase beta chain family. The RNAP catalytic core consists of 2 alpha, 1 beta, 1 beta' and 1 omega subunit. When a sigma factor is associated with the core the holoenzyme is formed, which can initiate transcription.

The enzyme catalyses RNA(n) + a ribonucleoside 5'-triphosphate = RNA(n+1) + diphosphate. In terms of biological role, DNA-dependent RNA polymerase catalyzes the transcription of DNA into RNA using the four ribonucleoside triphosphates as substrates. This chain is DNA-directed RNA polymerase subunit beta, found in Ralstonia nicotianae (strain ATCC BAA-1114 / GMI1000) (Ralstonia solanacearum).